The chain runs to 446 residues: MREIVHIQTGQCGNQIGAAFWQTISGEHGLDSNGIYGGSSELQLERMNVYFNEANNNKYVPRAVLVDLEPGTMDAVRAGPFGQLFRPDNFIFGQSSAGNNWAKGHYTEGAELVDNVLDVIRREAEGCDCLQGFQITHSLGGGTGSGMGTLLISKIREEFPDRMMATFSVVPSPKVSDTVVEPYNATLSVHQLVENSDETFCIDNEALYDICMRTLKLSNPAYGDLNYLVSAVMSGITTCLRFPGQLNSDLRKLAVNMVPFPRLHFFMVGFAPLTSPGAHSFRAVTVPELTQQMFDPKNMMAASDFRNGRYLTCCSIFRGKVAMKEVEDQMRNVQNKNSTYFVEWIPNNIQTALCAIPPRGLKMSSTFIGNSTSIQELFKRVGEQFSAMFRRKAFLHWYTGEGMDEMEFTEAESNMNDLVSEYQQYQEAGIDEEEEYEEEAPAEHEE.

Residues Gln11, Glu69, Ser138, Gly142, Thr143, Gly144, Asn204, and Asn226 each coordinate GTP. Position 69 (Glu69) interacts with Mg(2+). The segment at 426-446 (QEAGIDEEEEYEEEAPAEHEE) is disordered. Residues 429 to 440 (GIDEEEEYEEEA) show a composition bias toward acidic residues.

Belongs to the tubulin family. Dimer of alpha and beta chains. A typical microtubule is a hollow water-filled tube with an outer diameter of 25 nm and an inner diameter of 15 nM. Alpha-beta heterodimers associate head-to-tail to form protofilaments running lengthwise along the microtubule wall with the beta-tubulin subunit facing the microtubule plus end conferring a structural polarity. Microtubules usually have 13 protofilaments but different protofilament numbers can be found in some organisms and specialized cells. The cofactor is Mg(2+).

It localises to the cytoplasm. Its subcellular location is the cytoskeleton. Functionally, tubulin is the major constituent of microtubules, a cylinder consisting of laterally associated linear protofilaments composed of alpha- and beta-tubulin heterodimers. Microtubules grow by the addition of GTP-tubulin dimers to the microtubule end, where a stabilizing cap forms. Below the cap, tubulin dimers are in GDP-bound state, owing to GTPase activity of alpha-tubulin. This is Tubulin beta-2 chain from Hypocrea virens (Gliocladium virens).